The chain runs to 254 residues: Probable phosphatase Sbal_1472 (254 aa).

Zn(2+) contacts are provided by histidine 8, histidine 10, histidine 16, histidine 41, glutamate 74, histidine 102, histidine 132, aspartate 193, and histidine 195.

This sequence belongs to the PHP family. Requires Zn(2+) as cofactor.

The chain is Probable phosphatase Sbal_1472 from Shewanella baltica (strain OS155 / ATCC BAA-1091).